Consider the following 110-residue polypeptide: Parvalbumin alpha (110 aa).

Serine 2 carries the N-acetylserine modification. 2 positions are modified to phosphoserine: serine 2 and serine 24. EF-hand domains lie at 39–74 and 78–110; these read KSPE…FSPD and LSVK…VAES. Aspartate 52, aspartate 54, serine 56, phenylalanine 58, glutamate 60, glutamate 63, aspartate 91, aspartate 93, aspartate 95, lysine 97, and glutamate 102 together coordinate Ca(2+).

It belongs to the parvalbumin family.

Its function is as follows. In muscle, parvalbumin is thought to be involved in relaxation after contraction. It binds two calcium ions. This Bos taurus (Bovine) protein is Parvalbumin alpha (PVALB).